The following is a 597-amino-acid chain: Coronatine-insensitive protein homolog 1b (597 aa).

Residues 22–64 (SIPEEALHLVLGYVDDPRDREAVSLVCRRWHRIDALTRKHVTV) form the F-box domain. Residues Arg92, Arg353, Tyr391, Arg414, and Arg501 each coordinate jasmonate.

As to quaternary structure, interacts with TIFY10C/JAZ8 in a coronatine-dependent manner. Interacts with TIFY3/JAZ1, TIFY6A/JAZ3, TIFY6B/JAZ4, TIFY10A/JAZ6, TIFY10B/JAZ7, TIFY11A/JAZ9, TIFY11B/JAZ10, TIFY11C/JAZ11 and TIFY11D/JAZ12 in a coronatine-dependent manner. In terms of tissue distribution, expressed in roots, shoots, leaf sheaths and leaf blades.

Its function is as follows. Involved in jasmonate (JA) signaling. Required for jasmonate signaling in plant defense responses. Can complement Arabidopsis coi1-1 mutant and restore jasmonate signaling. Component of SCF(COI1) E3 ubiquitin ligase complexes, which may mediate the ubiquitination and subsequent proteasomal degradation of target proteins, including TIFY/JAZ family. In Oryza sativa subsp. japonica (Rice), this protein is Coronatine-insensitive protein homolog 1b.